Consider the following 448-residue polypeptide: N-succinylarginine dihydrolase (448 aa).

Substrate contacts are provided by residues alanine 19–serine 28, asparagine 110, and histidine 137–arginine 138. Glutamate 174 is a catalytic residue. Arginine 216 contacts substrate. Histidine 252 is a catalytic residue. Residues aspartate 254 and asparagine 366 each contribute to the substrate site. Cysteine 372 (nucleophile) is an active-site residue.

The protein belongs to the succinylarginine dihydrolase family. Homodimer.

It catalyses the reaction N(2)-succinyl-L-arginine + 2 H2O + 2 H(+) = N(2)-succinyl-L-ornithine + 2 NH4(+) + CO2. It participates in amino-acid degradation; L-arginine degradation via AST pathway; L-glutamate and succinate from L-arginine: step 2/5. In terms of biological role, catalyzes the hydrolysis of N(2)-succinylarginine into N(2)-succinylornithine, ammonia and CO(2). The protein is N-succinylarginine dihydrolase of Legionella pneumophila (strain Paris).